A 592-amino-acid chain; its full sequence is Probable tubulin polyglutamylase TTLL2 (592 aa).

Disordered stretches follow at residues 1 to 23 and 51 to 77; these read MRGR…TTTP and GVSI…MAED. Over residues 7–23 the composition is skewed to polar residues; the sequence is CSSTQSQALGSLRTTTP. One can recognise a TTL domain in the interval 84 to 427; that stretch reads LKPLVFRVDE…NGLRNEGREA (344 aa). ATP contacts are provided by residues lysine 212, 218–219, 240–243, and 253–255; these read RG, QKYI, and KCD. Residue arginine 218 coordinates a protein. Arginine 279 is an L-glutamate binding site. 298 to 299 contributes to the ATP binding site; sequence TN. Residues serine 301 and lysine 321 each contribute to the L-glutamate site. Mg(2+) is bound by residues aspartate 373, glutamate 386, and asparagine 388. Residue lysine 404 participates in L-glutamate binding.

Belongs to the tubulin--tyrosine ligase family. It depends on Mg(2+) as a cofactor. Testis.

Probable tubulin polyglutamylase that generates side chains of glutamate on the gamma-carboxyl group of specific glutamate residues within the C-terminal tail of target proteins. Similar to TTLL1, may acquire enzymatic activity only in complex with other proteins as it is most likely lacking domains important for autonomous activity. Probably involved in the side-chain initiation step of the polyglutamylation reaction rather than the elongation step. The protein is Probable tubulin polyglutamylase TTLL2 of Homo sapiens (Human).